Reading from the N-terminus, the 490-residue chain is MTERVDPKKLIKGGLHDWEVVIGMEIHAQVTSRSKLFSGASTEFGGEPNDHVSLVDAAMPGMLPVINEECVAQAVRTGLGLKAQINLRSVFDRKNYFYPDLPQGYQISQYKDPIVGEGEVLVDLPEGESITVGIERLHLEQDAGKSLHDQDPTKSFVDLNRSGVALMEIVSRPDLRSSEEARAYVTKLRTILRYLGTCDGDMEKGSLRADVNVSVRRPGEPLGTRCEIKNVNSIRFIGQAIETEARRQIAILEDGGKIDQETRLYDPGKGETRSMRSKEEAHDYRYFPDPDLLPLEFDQAYVDALASGLPELPDAKKARFIKDFGLSAYDAGVLVAERASADYFEAVARGRDGKAAANWVINELFGRLNKEGRSIEDTPVSAEQLGTIVDLIGDGVISGKIAKDLFEIVWSEGGDPRAIVEARGMKQVTDTGAIEAAVDAIIAANPDKVEQAKAKPTLLGWFVGQTMKATGGKANPAAVNALLKDKLGIE.

This sequence belongs to the GatB/GatE family. GatB subfamily. As to quaternary structure, heterotrimer of A, B and C subunits.

The enzyme catalyses L-glutamyl-tRNA(Gln) + L-glutamine + ATP + H2O = L-glutaminyl-tRNA(Gln) + L-glutamate + ADP + phosphate + H(+). The catalysed reaction is L-aspartyl-tRNA(Asn) + L-glutamine + ATP + H2O = L-asparaginyl-tRNA(Asn) + L-glutamate + ADP + phosphate + 2 H(+). Allows the formation of correctly charged Asn-tRNA(Asn) or Gln-tRNA(Gln) through the transamidation of misacylated Asp-tRNA(Asn) or Glu-tRNA(Gln) in organisms which lack either or both of asparaginyl-tRNA or glutaminyl-tRNA synthetases. The reaction takes place in the presence of glutamine and ATP through an activated phospho-Asp-tRNA(Asn) or phospho-Glu-tRNA(Gln). This is Aspartyl/glutamyl-tRNA(Asn/Gln) amidotransferase subunit B from Methylorubrum extorquens (strain CM4 / NCIMB 13688) (Methylobacterium extorquens).